Reading from the N-terminus, the 208-residue chain is Bacitracin transport permease protein BCRB (208 aa).

The next 6 membrane-spanning stretches (helical) occupy residues 23-43, 70-90, 111-131, 135-155, 159-179, and 182-202; these read LYIV…YLFN, VLLL…TLLF, FMIG…VTLL, YVPT…VYGT, ALFP…PEYP, and YSFI…IVYF.

It localises to the cell membrane. Part of the binding-protein-dependent transport system for bacitracin that confer resistance to this antibiotic; probably responsible for the translocation of the substrate across the membrane. In Bacillus licheniformis, this protein is Bacitracin transport permease protein BCRB (bcrB).